The sequence spans 149 residues: Large ribosomal subunit protein uL22c (149 aa).

This sequence belongs to the universal ribosomal protein uL22 family. Part of the 50S ribosomal subunit.

The protein localises to the plastid. The protein resides in the chloroplast. Functionally, this protein binds specifically to 23S rRNA. The globular domain of the protein is located near the polypeptide exit tunnel on the outside of the subunit, while an extended beta-hairpin is found that lines the wall of the exit tunnel in the center of the 70S ribosome. In Oryza nivara (Indian wild rice), this protein is Large ribosomal subunit protein uL22c (rpl22).